Reading from the N-terminus, the 293-residue chain is 4-hydroxy-tetrahydrodipicolinate synthase (293 aa).

Thr-46 contributes to the pyruvate binding site. The Proton donor/acceptor role is filled by Tyr-133. Lys-161 functions as the Schiff-base intermediate with substrate in the catalytic mechanism. Position 202 (Val-202) interacts with pyruvate.

Belongs to the DapA family. Homotetramer; dimer of dimers.

It is found in the cytoplasm. The enzyme catalyses L-aspartate 4-semialdehyde + pyruvate = (2S,4S)-4-hydroxy-2,3,4,5-tetrahydrodipicolinate + H2O + H(+). Its pathway is amino-acid biosynthesis; L-lysine biosynthesis via DAP pathway; (S)-tetrahydrodipicolinate from L-aspartate: step 3/4. Its function is as follows. Catalyzes the condensation of (S)-aspartate-beta-semialdehyde [(S)-ASA] and pyruvate to 4-hydroxy-tetrahydrodipicolinate (HTPA). In Wolbachia pipientis subsp. Culex pipiens (strain wPip), this protein is 4-hydroxy-tetrahydrodipicolinate synthase.